The following is a 250-amino-acid chain: Ribonuclease HII (250 aa).

In terms of domain architecture, RNase H type-2 spans 66 to 250 (QLVAGVDEVG…SFAPVSEYEK (185 aa)). A divalent metal cation contacts are provided by Asp72, Glu73, and Asp164.

The protein belongs to the RNase HII family. Requires Mn(2+) as cofactor. Mg(2+) is required as a cofactor.

The protein resides in the cytoplasm. It carries out the reaction Endonucleolytic cleavage to 5'-phosphomonoester.. Functionally, endonuclease that specifically degrades the RNA of RNA-DNA hybrids. This is Ribonuclease HII from Lactobacillus gasseri (strain ATCC 33323 / DSM 20243 / BCRC 14619 / CIP 102991 / JCM 1131 / KCTC 3163 / NCIMB 11718 / NCTC 13722 / AM63).